The following is a 190-amino-acid chain: uncharacterized protein (190 aa).

The N-terminal stretch at 1–28 (MEFSLQYITIFIFVILFLIGLFSSKSRS) is a signal peptide.

This is an uncharacterized protein from Haemophilus influenzae (strain ATCC 51907 / DSM 11121 / KW20 / Rd).